A 131-amino-acid chain; its full sequence is Bypass of stop codon protein 4 (131 aa).

This is Bypass of stop codon protein 4 (BSC4) from Saccharomyces cerevisiae (strain ATCC 204508 / S288c) (Baker's yeast).